The sequence spans 468 residues: Zinc transporter SLC39A7 (468 aa).

A helical membrane pass occupies residues 10–30; that stretch reads WVAVGLLTWAALGLLVAGHEG. Basic and acidic residues-rich tracts occupy residues 36–56 and 64–100; these read RDVE…DFHH and HTHE…DSLH. Residues 36-116 form a disordered region; that stretch reads RDVEEDFHGH…SHGASREAGA (81 aa). H64 is modified (pros-methylhistidine). A run of 3 helical transmembrane segments spans residues 132–152, 163–183, and 208–228; these read ALGA…LIPV, LQIL…LHLI, and GPIL…LVVE. Over residues 237–248 the composition is skewed to basic residues; the sequence is GHGHAHAHGHGH. The segment at 237-313 is disordered; sequence GHGHAHAHGH…NPEEEKTGSD (77 aa). Positions 249-312 are enriched in basic and acidic residues; sequence SHGDSHAHGH…QNPEEEKTGS (64 aa). The next 3 membrane-spanning stretches (helical) occupy residues 385 to 405, 409 to 429, and 447 to 467; these read LTAI…GGAV, VAGG…FIYV, and SLLE…IAHL.

It belongs to the ZIP transporter (TC 2.A.5) family. KE4/Catsup subfamily. As to quaternary structure, homodimer. Rapidly phosphorylated by CK2 following Zn(2+) treatment. This phosphorylation is required for efficient cytosolic Zn(2+) release.

The protein localises to the endoplasmic reticulum membrane. It localises to the golgi apparatus. It is found in the cis-Golgi network membrane. The catalysed reaction is Zn(2+)(in) = Zn(2+)(out). In terms of biological role, transports Zn(2+) from the endoplasmic reticulum (ER)/Golgi apparatus to the cytosol, playing an essential role in the regulation of cytosolic zinc levels. Acts as a gatekeeper of zinc release from intracellular stores, requiring post-translational activation by phosphorylation on residues, resulting in activation of multiple downstream pathways leading to cell growth and proliferation. Has an essential role in B cell development and is required for proper B cell receptor signaling. Plays an important role in maintaining intestinal epithelial homeostasis and skin dermis development by regulating ER function. Controls cell signaling pathways involved in glucose metabolism in skeletal muscle. Has a protective role against ER stress in different biological contexts. Mediates Zn(2+)-induced ferroptosis. The protein is Zinc transporter SLC39A7 of Rattus norvegicus (Rat).